A 460-amino-acid chain; its full sequence is Bifunctional protein GlmU (460 aa).

Positions 1–229 (MTNYAIILAA…FNESLGVNDR (229 aa)) are pyrophosphorylase. Residues 8–11 (LAAG), Lys-22, Gln-72, and 77–78 (GT) each bind UDP-N-acetyl-alpha-D-glucosamine. Asp-102 provides a ligand contact to Mg(2+). Gly-139, Glu-154, Asn-169, and Asn-227 together coordinate UDP-N-acetyl-alpha-D-glucosamine. Asn-227 serves as a coordination point for Mg(2+). The tract at residues 230-250 (VALATAETVMRQRITQKHMVN) is linker. The tract at residues 251 to 460 (GVTFQNPETV…RLAHHPSRSK (210 aa)) is N-acetyltransferase. UDP-N-acetyl-alpha-D-glucosamine-binding residues include Arg-332 and Lys-350. His-362 functions as the Proton acceptor in the catalytic mechanism. UDP-N-acetyl-alpha-D-glucosamine contacts are provided by Tyr-365 and Asn-376. Acetyl-CoA contacts are provided by residues Ala-379, 385 to 386 (NY), Ser-404, Ala-422, and Arg-439.

The protein in the N-terminal section; belongs to the N-acetylglucosamine-1-phosphate uridyltransferase family. It in the C-terminal section; belongs to the transferase hexapeptide repeat family. In terms of assembly, homotrimer. It depends on Mg(2+) as a cofactor.

Its subcellular location is the cytoplasm. It catalyses the reaction alpha-D-glucosamine 1-phosphate + acetyl-CoA = N-acetyl-alpha-D-glucosamine 1-phosphate + CoA + H(+). The enzyme catalyses N-acetyl-alpha-D-glucosamine 1-phosphate + UTP + H(+) = UDP-N-acetyl-alpha-D-glucosamine + diphosphate. It participates in nucleotide-sugar biosynthesis; UDP-N-acetyl-alpha-D-glucosamine biosynthesis; N-acetyl-alpha-D-glucosamine 1-phosphate from alpha-D-glucosamine 6-phosphate (route II): step 2/2. Its pathway is nucleotide-sugar biosynthesis; UDP-N-acetyl-alpha-D-glucosamine biosynthesis; UDP-N-acetyl-alpha-D-glucosamine from N-acetyl-alpha-D-glucosamine 1-phosphate: step 1/1. The protein operates within bacterial outer membrane biogenesis; LPS lipid A biosynthesis. Its function is as follows. Catalyzes the last two sequential reactions in the de novo biosynthetic pathway for UDP-N-acetylglucosamine (UDP-GlcNAc). The C-terminal domain catalyzes the transfer of acetyl group from acetyl coenzyme A to glucosamine-1-phosphate (GlcN-1-P) to produce N-acetylglucosamine-1-phosphate (GlcNAc-1-P), which is converted into UDP-GlcNAc by the transfer of uridine 5-monophosphate (from uridine 5-triphosphate), a reaction catalyzed by the N-terminal domain. In Streptococcus pyogenes serotype M28 (strain MGAS6180), this protein is Bifunctional protein GlmU.